Reading from the N-terminus, the 274-residue chain is Large ribosomal subunit protein uL2 (274 aa).

Positions 223–274 are disordered; it reads VVMNPVDHPHGGGEGRTSGGRHPVSPWGVPTKGYKTRSNKRTDKYIVRRRNK.

Belongs to the universal ribosomal protein uL2 family. In terms of assembly, part of the 50S ribosomal subunit. Forms a bridge to the 30S subunit in the 70S ribosome.

Functionally, one of the primary rRNA binding proteins. Required for association of the 30S and 50S subunits to form the 70S ribosome, for tRNA binding and peptide bond formation. It has been suggested to have peptidyltransferase activity; this is somewhat controversial. Makes several contacts with the 16S rRNA in the 70S ribosome. The polypeptide is Large ribosomal subunit protein uL2 (Vibrio cholerae serotype O1 (strain M66-2)).